A 163-amino-acid polypeptide reads, in one-letter code: Phosphopantetheine adenylyltransferase (163 aa).

Serine 10 contributes to the substrate binding site. ATP-binding positions include 10–11 (SF) and histidine 18. 3 residues coordinate substrate: lysine 42, leucine 78, and lysine 92. Residues 93-95 (GVR), glutamate 103, and 127-133 (HAHVSSS) each bind ATP.

This sequence belongs to the bacterial CoaD family. As to quaternary structure, homohexamer. The cofactor is Mg(2+).

It localises to the cytoplasm. It catalyses the reaction (R)-4'-phosphopantetheine + ATP + H(+) = 3'-dephospho-CoA + diphosphate. It functions in the pathway cofactor biosynthesis; coenzyme A biosynthesis; CoA from (R)-pantothenate: step 4/5. In terms of biological role, reversibly transfers an adenylyl group from ATP to 4'-phosphopantetheine, yielding dephospho-CoA (dPCoA) and pyrophosphate. This chain is Phosphopantetheine adenylyltransferase, found in Clavibacter michiganensis subsp. michiganensis (strain NCPPB 382).